Reading from the N-terminus, the 486-residue chain is GTPase Obg (486 aa).

The region spanning 2 to 159 (SRFIDRVVLH…RELVLELKSV (158 aa)) is the Obg domain. Residues 160–340 (ADVGLVGFPS…LTFALAKLVA (181 aa)) enclose the OBG-type G domain. GTP contacts are provided by residues 166-173 (GFPSAGKS), 191-195 (FTTLV), 212-215 (DVPG), 292-295 (NKAD), and 321-323 (SAV). Residues Ser173 and Thr193 each contribute to the Mg(2+) site. The OCT domain maps to 358–438 (PVISNENSFS…IGNVSFDWEP (81 aa)). Residues 462–486 (RIGATERKHASRIRRGLEGLDPEDQ) are disordered.

It belongs to the TRAFAC class OBG-HflX-like GTPase superfamily. OBG GTPase family. Monomer. Requires Mg(2+) as cofactor.

Its subcellular location is the cytoplasm. Functionally, an essential GTPase which binds GTP, GDP and possibly (p)ppGpp with moderate affinity, with high nucleotide exchange rates and a fairly low GTP hydrolysis rate. Plays a role in control of the cell cycle, stress response, ribosome biogenesis and in those bacteria that undergo differentiation, in morphogenesis control. The sequence is that of GTPase Obg from Rhodococcus jostii (strain RHA1).